Here is a 612-residue protein sequence, read N- to C-terminus: ETS-related transcription factor Elf-1 (612 aa).

A phosphoserine mark is found at S110, S163, S167, and S168. Positions 156 to 169 are enriched in polar residues; sequence VQETNADSPGASSP. Positions 156–199 are disordered; that stretch reads VQETNADSPGASSPEQRKRKKGRKTKPPRPDSPTTTPNISVKKK. Basic residues predominate over residues 172-182; it reads RKRKKGRKTKP. A Phosphoserine modification is found at S187. T190 carries the post-translational modification Phosphothreonine. Positions 208–290 form a DNA-binding region, ETS; the sequence is IYLWEFLLAL…EGQRLVYQFK (83 aa). Residues 300-361 form a disordered region; the sequence is DDEDPSSSIE…AANPKDPVEV (62 aa). Over residues 305–322 the composition is skewed to low complexity; sequence SSSIESSDQSLSSTTASS. Polar residues predominate over residues 323 to 335; that stretch reads RNQANRSRVSSSP. S431 is subject to Phosphoserine. Residues 562–577 are compositionally biased toward basic and acidic residues; sequence EVEKKAEDDLNEDAEK. The segment at 562–586 is disordered; that stretch reads EVEKKAEDDLNEDAEKSAQQPQPYV.

Belongs to the ETS family. Binds to the underphosphorylated form of RB. May interact with other transcription factors in order to regulate specific genes. Interacts with RUNX1. Interacts with SP1; the interaction is inhibited by glycosylation of SP1. Predominantly found in hematopoietic cells. Detected in other cell types such as fibroblasts.

It is found in the nucleus. Its function is as follows. Transcription factor that activates the LYN and BLK promoters. This chain is ETS-related transcription factor Elf-1 (Elf1), found in Mus musculus (Mouse).